A 34-amino-acid chain; its full sequence is Photosystem II reaction center protein M (34 aa).

The chain crosses the membrane as a helical span at residues 5-25 (ILAFIATALFILVPTAFLLII).

Belongs to the PsbM family. PSII is composed of 1 copy each of membrane proteins PsbA, PsbB, PsbC, PsbD, PsbE, PsbF, PsbH, PsbI, PsbJ, PsbK, PsbL, PsbM, PsbT, PsbX, PsbY, PsbZ, Psb30/Ycf12, at least 3 peripheral proteins of the oxygen-evolving complex and a large number of cofactors. It forms dimeric complexes.

The protein resides in the plastid. The protein localises to the chloroplast thylakoid membrane. Functionally, one of the components of the core complex of photosystem II (PSII). PSII is a light-driven water:plastoquinone oxidoreductase that uses light energy to abstract electrons from H(2)O, generating O(2) and a proton gradient subsequently used for ATP formation. It consists of a core antenna complex that captures photons, and an electron transfer chain that converts photonic excitation into a charge separation. This subunit is found at the monomer-monomer interface. In Cenchrus americanus (Pearl millet), this protein is Photosystem II reaction center protein M.